A 248-amino-acid chain; its full sequence is Coproheme decarboxylase (248 aa).

Residues arginine 130, 144–148 (YPMDK), histidine 171, glutamine 184, and serine 222 each bind Fe-coproporphyrin III. Tyrosine 144 is an active-site residue.

This sequence belongs to the ChdC family. Type 1 subfamily. It depends on Fe-coproporphyrin III as a cofactor.

It catalyses the reaction Fe-coproporphyrin III + 2 H2O2 + 2 H(+) = heme b + 2 CO2 + 4 H2O. The catalysed reaction is Fe-coproporphyrin III + H2O2 + H(+) = harderoheme III + CO2 + 2 H2O. It carries out the reaction harderoheme III + H2O2 + H(+) = heme b + CO2 + 2 H2O. The protein operates within porphyrin-containing compound metabolism; protoheme biosynthesis. Involved in coproporphyrin-dependent heme b biosynthesis. Catalyzes the decarboxylation of Fe-coproporphyrin III (coproheme) to heme b (protoheme IX), the last step of the pathway. The reaction occurs in a stepwise manner with a three-propionate intermediate. In Geobacillus thermodenitrificans (strain NG80-2), this protein is Coproheme decarboxylase.